Consider the following 893-residue polypeptide: Valine--tRNA ligase (893 aa).

The short motif at 57–67 is the 'HIGH' region element; it reads PNVTGTLHMGH. The 'KMSKS' region signature appears at 545 to 549; that stretch reads KMSKS. Lysine 548 is a binding site for ATP. Residues 821 to 855 are a coiled coil; the sequence is TSGSVDLEAERKRLEKDLAAAQKELATTEGKLGNE.

This sequence belongs to the class-I aminoacyl-tRNA synthetase family. ValS type 1 subfamily. Monomer.

The protein resides in the cytoplasm. The enzyme catalyses tRNA(Val) + L-valine + ATP = L-valyl-tRNA(Val) + AMP + diphosphate. Its function is as follows. Catalyzes the attachment of valine to tRNA(Val). As ValRS can inadvertently accommodate and process structurally similar amino acids such as threonine, to avoid such errors, it has a 'posttransfer' editing activity that hydrolyzes mischarged Thr-tRNA(Val) in a tRNA-dependent manner. The sequence is that of Valine--tRNA ligase from Nocardia farcinica (strain IFM 10152).